Consider the following 548-residue polypeptide: MLTRIHGGRVVDPTAGRDAVGDVWIEDGRVVAPSERAPDQTIDATGCVVMAGGVEVHSHIAGGNVVMSRLLLPDLYVSESAPNGHPFAHAGGSGSWIGANYARMGYTTAVEPALPPSNALATHLELADIPLLDRGGLAVLGNDDHLLQLLRDGEGKQAVRDLVQQTLAHSRGLGVKCINAGGASAFKDGVLKLSLDDEIPCYGLSTRKIMSALLDAVEEIGVPHPLHVHCNNLGLPGADDSLVATLEAAEGRRIHFAHAQFYAYGVVDPENPMTGGFRSAAERINAAMEAHPNATYDVGQVVFGQTVTISLDILRQFGGRKGAKPKKWVISAGDAEGGGVVPFLYRPRGPVSSLQWAIGLELMLLSSNPERTILTTDHPNGGVFTEYPRIIHLLMDAEERAKEIATLPAIVGERSGLPKIEREYSFSEIAQLTRSGPAKLLGLTDRGHLREGAKADVAIYRDDKDRTAMFSRAKLVLKDGQPIVEDGEVVAWFSGKTLSLDVEADAGMEKRAESYLQDRFGAGLDTFAVPDAAFPENTGTFEDVACRA.

Positions 57, 59, and 227 each coordinate Zn(2+).

Belongs to the metallo-dependent hydrolases superfamily. FwdA/FmdA family. In terms of assembly, octaheteromer. Part of the formyltransferase/hydrolase complex fhc; composed of FhcA, FhcB, FhcC and FhcD. Requires Zn(2+) as cofactor.

It localises to the cytoplasm. The catalysed reaction is N-formylmethanofuran + H2O = methanofuran + formate. It functions in the pathway one-carbon metabolism; formaldehyde degradation; formate from formaldehyde (H(4)MPT route): step 4/5. Involved in the transformation of 5-formyl tetrahydromethanopterin (5-formyl-H(4)MPT) to methanofuran (MFR) and formate via the formylmethanofuran (formyl-MFR). May be catalyze the hydrolysis of formylmethanofuran (formyl-MFR) to yield formate and MFR. In Methylorubrum extorquens (strain ATCC 14718 / DSM 1338 / JCM 2805 / NCIMB 9133 / AM1) (Methylobacterium extorquens), this protein is Formyltransferase/hydrolase complex Fhc subunit A (fhcA).